A 194-amino-acid polypeptide reads, in one-letter code: Large ribosomal subunit protein uL6z/uL6y (194 aa).

T75 bears the Phosphothreonine mark.

This sequence belongs to the universal ribosomal protein uL6 family.

This is Large ribosomal subunit protein uL6z/uL6y (RPL9B) from Arabidopsis thaliana (Mouse-ear cress).